The chain runs to 494 residues: Glycerol kinase (494 aa).

Position 12 (Thr12) interacts with ADP. ATP contacts are provided by Thr12, Thr13, and Ser14. A sn-glycerol 3-phosphate-binding site is contributed by Thr12. Arg16 contributes to the ADP binding site. 4 residues coordinate sn-glycerol 3-phosphate: Arg82, Glu83, Tyr135, and Asp244. Arg82, Glu83, Tyr135, Asp244, and Gln245 together coordinate glycerol. 2 residues coordinate ADP: Thr266 and Gly309. Residues Thr266, Gly309, Gln313, and Gly409 each contribute to the ATP site. The ADP site is built by Gly409 and Asn413.

This sequence belongs to the FGGY kinase family.

It carries out the reaction glycerol + ATP = sn-glycerol 3-phosphate + ADP + H(+). It functions in the pathway polyol metabolism; glycerol degradation via glycerol kinase pathway; sn-glycerol 3-phosphate from glycerol: step 1/1. With respect to regulation, inhibited by fructose 1,6-bisphosphate (FBP). Its function is as follows. Key enzyme in the regulation of glycerol uptake and metabolism. Catalyzes the phosphorylation of glycerol to yield sn-glycerol 3-phosphate. The chain is Glycerol kinase from Alteromonas mediterranea (strain DSM 17117 / CIP 110805 / LMG 28347 / Deep ecotype).